We begin with the raw amino-acid sequence, 370 residues long: MKLNRFGAAVGVLAAGALVLSACGNDDNVTGGGATTGQASAKVDCGGKKTLKASGSTAQANAMTRFVNVFEQACPGQTLNYTANGSGAGISEFNGNQTDFGGSDVPLSKDEAAAAQRRCGSPAWNLPVVFGPIAVTYNLNSVSSLNLDGPTLAKIFNGSITQWNNPAIQALNRDFTLPGERIHVVFRSDESGTTDNFQRYLQAASNGAWGKGAGKSFQGGVGEGARGNDGTSAAAKNTPGSITYNEWSFAQAQHLTMANIVTSAGGDPVAITIDSVGQTIAGATISGVGNDLVLDTDSFYRPKRPGSYPIVLATYEIVCSKYPDSQVGTAVKAFLQSTIGAGQSGLGDNGYIPIPDEFKSRLSTAVNAIA.

The first 22 residues, 1-22 (MKLNRFGAAVGVLAAGALVLSA), serve as a signal peptide directing secretion. A lipid anchor (N-palmitoyl cysteine) is attached at cysteine 23. Cysteine 23 carries S-diacylglycerol cysteine lipidation. Phosphate contacts are provided by residues 56 to 58 (STA), serine 86, aspartate 104, and 191 to 193 (SGT).

This sequence belongs to the PstS family. The complex is composed of two ATP-binding proteins (PstB), two transmembrane proteins (PstC and PstA) and a solute-binding protein (PstS).

Its subcellular location is the cell membrane. In terms of biological role, part of the ABC transporter complex PstSACB involved in phosphate import. In Mycobacterium bovis (strain ATCC BAA-935 / AF2122/97), this protein is Phosphate-binding protein PstS 3 (pstS3).